The chain runs to 613 residues: Probable inactive purple acid phosphatase 1 (613 aa).

The N-terminal stretch at 1-24 is a signal peptide; that stretch reads MRESLVAILVTVISVLGAIHQVKS. N-linked (GlcNAc...) asparagine glycans are attached at residues Asn-89 and Asn-116. Residue Asp-295 participates in Fe cation binding. N-linked (GlcNAc...) asparagine glycosylation is present at Asn-316. The Fe cation site is built by Asp-336 and Tyr-339. Asp-336 is a Zn(2+) binding site. Residues Asn-369, His-458, and His-500 each coordinate Zn(2+). Position 369 (Asn-369) interacts with substrate. Residue 500–502 coordinates substrate; sequence HAH. His-502 provides a ligand contact to Fe cation. 2 N-linked (GlcNAc...) asparagine glycosylation sites follow: Asn-528 and Asn-551.

The protein belongs to the metallophosphoesterase superfamily. Purple acid phosphatase family. As to quaternary structure, homodimer. The cofactor is Fe cation. Zn(2+) serves as cofactor. In terms of tissue distribution, expressed in roots, stems, leaves, flowers and siliques.

It is found in the secreted. The protein is Probable inactive purple acid phosphatase 1 (PAP1) of Arabidopsis thaliana (Mouse-ear cress).